We begin with the raw amino-acid sequence, 1004 residues long: Presequence protease, mitochondrial (1004 aa).

Residues 1-34 (MLRNAAAGARKAVTELSQFPKPGEKLHGFTLVRS) constitute a mitochondrion transit peptide. His-84 is a Zn(2+) binding site. Glu-87 functions as the Proton acceptor in the catalytic mechanism. Zn(2+) is bound at residue His-88. Glu-160 is an active-site residue. Residue Glu-188 participates in Zn(2+) binding.

The protein belongs to the peptidase M16 family. PreP subfamily. Monomer and homodimer; homodimerization is induced by binding of the substrate. Requires Zn(2+) as cofactor.

It localises to the mitochondrion intermembrane space. The protein localises to the mitochondrion matrix. Degrades mitochondrial transit peptides after their cleavage in the intermembrane space or in the matrix, and presequence peptides; clearance of these peptides is required to keep the presequence processing machinery running. Preferentially cleaves the N-terminal side of paired basic amino acid residues. Also degrades other unstructured peptides. May function as an ATP-dependent peptidase as opposed to a metalloendopeptidase. This Gibberella zeae (strain ATCC MYA-4620 / CBS 123657 / FGSC 9075 / NRRL 31084 / PH-1) (Wheat head blight fungus) protein is Presequence protease, mitochondrial (CYM1).